Here is a 258-residue protein sequence, read N- to C-terminus: Putative ankyrin repeat domain-containing protein 30B-like (258 aa).

The segment at 1–21 (MERLSAAPVKGQTGPERPSPF) is disordered. ANK repeat units lie at residues 71–100 (KKRT…QLDV), 104–133 (ENRT…DPNI), 137–166 (YGNT…DIEV), and 170–199 (AGHT…NANA). The disordered stretch occupies residues 216 to 258 (KISKNSQNSNPEGTSEGTPDEAAPLAERTPDTAESLVERTPDE). A compositionally biased stretch (polar residues) spans 218-232 (SKNSQNSNPEGTSEG). Over residues 243–258 (RTPDTAESLVERTPDE) the composition is skewed to basic and acidic residues.

This Homo sapiens (Human) protein is Putative ankyrin repeat domain-containing protein 30B-like (ANKRD30BL).